Consider the following 255-residue polypeptide: Pimeloyl-[acyl-carrier protein] methyl ester esterase (255 aa).

Positions L16–P242 constitute an AB hydrolase-1 domain. Substrate-binding positions include W22, S82–L83, and F143–Q147. The active-site Nucleophile is the S82. Residues D207 and H235 contribute to the active site. Substrate is bound at residue H235.

This sequence belongs to the AB hydrolase superfamily. Carboxylesterase BioH family. As to quaternary structure, monomer.

Its subcellular location is the cytoplasm. It carries out the reaction 6-carboxyhexanoyl-[ACP] methyl ester + H2O = 6-carboxyhexanoyl-[ACP] + methanol + H(+). Its pathway is cofactor biosynthesis; biotin biosynthesis. The physiological role of BioH is to remove the methyl group introduced by BioC when the pimeloyl moiety is complete. It allows to synthesize pimeloyl-ACP via the fatty acid synthetic pathway through the hydrolysis of the ester bonds of pimeloyl-ACP esters. This is Pimeloyl-[acyl-carrier protein] methyl ester esterase from Pectobacterium carotovorum subsp. carotovorum (strain PC1).